A 69-amino-acid chain; its full sequence is Neurotoxin Cex5 (69 aa).

A signal peptide is located at residue A1. Residues 2–67 (KDGYLVSKST…TYPIPGKSCG (66 aa)) form the LCN-type CS-alpha/beta domain. Intrachain disulfides connect C13-C66, C17-C42, C26-C47, and C30-C49. At C66 the chain carries Cysteine amide. Residues 67-69 (GKK) constitute a propeptide that is removed on maturation.

This sequence belongs to the long (4 C-C) scorpion toxin superfamily. Sodium channel inhibitor family. Beta subfamily. As to expression, expressed by the venom gland.

The protein localises to the secreted. Beta toxins bind voltage-independently at site-4 of sodium channels (Nav) and shift the voltage of activation toward more negative potentials thereby affecting sodium channel activation and promoting spontaneous and repetitive firing. The polypeptide is Neurotoxin Cex5 (Centruroides exilicauda (Bark scorpion)).